We begin with the raw amino-acid sequence, 698 residues long: Nitric oxide-associated protein 1 (698 aa).

The tract at residues 42-66 is disordered; the sequence is FQHSSSLGRELPYDPVDTEGFGEGG. Tyr77 is subject to Phosphotyrosine. Disordered stretches follow at residues 80–134 and 279–306; these read DPEP…DPAL and LAPG…PNWS. The segment covering 102–126 has biased composition (basic and acidic residues); sequence ERQRQQRREERRQQNLRARSREHPV. The CP-type G domain maps to 202–503; it reads LELVSAALRR…FYDTPGITKE (302 aa).

It belongs to the TRAFAC class YlqF/YawG GTPase family. NOA1 subfamily. Homodimer or multimer. Interacts with mitochondrial complex I, DAP3, MRPL12 and MRPS27.

Its subcellular location is the mitochondrion inner membrane. Its function is as follows. Involved in regulation of mitochondrial protein translation and respiration. Plays a role in mitochondria-mediated cell death. May act as a scaffolding protein or stabilizer of respiratory chain supercomplexes. Binds GTP. In Homo sapiens (Human), this protein is Nitric oxide-associated protein 1 (NOA1).